Reading from the N-terminus, the 311-residue chain is Thioredoxin reductase (311 aa).

35-42 (ERGIPGGQ) provides a ligand contact to FAD. Cys-134 and Cys-137 are joined by a disulfide. 277 to 286 (DVRDKGLRQI) provides a ligand contact to FAD.

Belongs to the class-II pyridine nucleotide-disulfide oxidoreductase family. As to quaternary structure, homodimer. Requires FAD as cofactor.

Its subcellular location is the cytoplasm. The catalysed reaction is [thioredoxin]-dithiol + NADP(+) = [thioredoxin]-disulfide + NADPH + H(+). In Staphylococcus aureus (strain MRSA252), this protein is Thioredoxin reductase (trxB).